The following is a 257-amino-acid chain: Tryptophan synthase alpha chain (257 aa).

Residues E51 and D62 each act as proton acceptor in the active site.

The protein belongs to the TrpA family. In terms of assembly, tetramer of two alpha and two beta chains.

It catalyses the reaction (1S,2R)-1-C-(indol-3-yl)glycerol 3-phosphate + L-serine = D-glyceraldehyde 3-phosphate + L-tryptophan + H2O. Its pathway is amino-acid biosynthesis; L-tryptophan biosynthesis; L-tryptophan from chorismate: step 5/5. Functionally, the alpha subunit is responsible for the aldol cleavage of indoleglycerol phosphate to indole and glyceraldehyde 3-phosphate. In Nitratidesulfovibrio vulgaris (strain ATCC 29579 / DSM 644 / CCUG 34227 / NCIMB 8303 / VKM B-1760 / Hildenborough) (Desulfovibrio vulgaris), this protein is Tryptophan synthase alpha chain.